Here is a 225-residue protein sequence, read N- to C-terminus: NAD(P)H-quinone oxidoreductase subunit K, chloroplastic (225 aa).

[4Fe-4S] cluster is bound by residues cysteine 43, cysteine 44, cysteine 108, and cysteine 139.

This sequence belongs to the complex I 20 kDa subunit family. As to quaternary structure, NDH is composed of at least 16 different subunits, 5 of which are encoded in the nucleus. The cofactor is [4Fe-4S] cluster.

It is found in the plastid. Its subcellular location is the chloroplast thylakoid membrane. It catalyses the reaction a plastoquinone + NADH + (n+1) H(+)(in) = a plastoquinol + NAD(+) + n H(+)(out). The enzyme catalyses a plastoquinone + NADPH + (n+1) H(+)(in) = a plastoquinol + NADP(+) + n H(+)(out). In terms of biological role, NDH shuttles electrons from NAD(P)H:plastoquinone, via FMN and iron-sulfur (Fe-S) centers, to quinones in the photosynthetic chain and possibly in a chloroplast respiratory chain. The immediate electron acceptor for the enzyme in this species is believed to be plastoquinone. Couples the redox reaction to proton translocation, and thus conserves the redox energy in a proton gradient. The protein is NAD(P)H-quinone oxidoreductase subunit K, chloroplastic of Guizotia abyssinica (Niger).